The chain runs to 489 residues: Cytochrome P450 monooxygenase AMT3 (489 aa).

A helical transmembrane segment spans residues 292-312 (LFMVAGTETTITALSGLVFLL). Heme is bound at residue Cys-436.

It belongs to the cytochrome P450 family. Heme serves as cofactor.

It is found in the membrane. It functions in the pathway mycotoxin biosynthesis. Cytochrome P450 monooxygenase; part of the gene clusters that mediate the biosynthesis of AM-toxins, host-selective toxins (HSTs) causing Alternaria blotch on apple, a worldwide distributed disease. AM-toxins are cyclic depsipeptides containing the 3 residues 2-hydroxy-isovaleric acid (2-HIV), dehydroalanine, L-alanine which are common for all 3 AM-toxins I to III. The fourth precursor is L-alpha-amino-methoxyphenyl-valeric acid (L-Amv) for AM-toxin I, L-alpha-amino-phenyl-valeric acid (L-Apv) for AM-toxin II, and L-alpha-amino-hydroxyphenyl-valeric acid (L-Ahv) for AM-toxin III. AM-toxins have two target sites for affecting susceptible apple cells; they cause invagination of the plasma membrane and electrolyte loss and chloroplast disorganization. The non-ribosomal peptide synthetase AMT1 contains 4 catalytic modules and is responsible for activation of each residue in AM-toxin. The aldo-keto reductase AMT2 catalyzes the conversion of 2-keto-isovaleric acid (2-KIV) to 2-hydroxy-isovaleric acid (2-HIV), one of the precursor residues incorporated by AMT1 during AM-toxin biosynthesis, by reduction of its ketone to an alcohol. The cytochrome P450 monooxygenase AMT3 and the thioesterase AMT4 are also important for AM-toxin production, but their exact function within the AM-toxin biosynthesis are not known yet. Up to 21 proteins (including AMT1 to AMT4) are predicted to be involved in AM-toxin biosynthesis since their expression ishighly up-regulated in AM-toxin-producing cultures. This is Cytochrome P450 monooxygenase AMT3 from Alternaria alternata (Alternaria rot fungus).